The following is a 251-amino-acid chain: MKIFYKAINMTLSMFTVIPSPKYEWDDRAAKHIMKLYPFIGLIIGALWYLSFFVLSKLNVPIMLMAALILTVPYILTGFLHLDGFMDVSDALLSRRDKETKLRILKDSTVGAFSVISVVLLLLVEFAGMFTVLNKNLDMRVLIFIPIASRAINGYFIVSQEMLGQSSLAKFFKEGTGKVDEIILLGIYVLVALITFFTLGINYLIAILAMGLISFILLLKVKKELGGINGDVAGYILVLMEFTGILLLGII.

7 helical membrane passes run 36-56 (LYPF…FVLS), 60-80 (VPIM…TGFL), 110-130 (VGAF…AGMF), 141-161 (VLIF…VSQE), 181-201 (EIIL…TLGI), 202-222 (NYLI…LKVK), and 231-251 (DVAG…LGII).

It belongs to the CobS family. It depends on Mg(2+) as a cofactor.

The protein localises to the cell membrane. It catalyses the reaction alpha-ribazole + adenosylcob(III)inamide-GDP = adenosylcob(III)alamin + GMP + H(+). The catalysed reaction is alpha-ribazole 5'-phosphate + adenosylcob(III)inamide-GDP = adenosylcob(III)alamin 5'-phosphate + GMP + H(+). It participates in cofactor biosynthesis; adenosylcobalamin biosynthesis; adenosylcobalamin from cob(II)yrinate a,c-diamide: step 7/7. In terms of biological role, joins adenosylcobinamide-GDP and alpha-ribazole to generate adenosylcobalamin (Ado-cobalamin). Also synthesizes adenosylcobalamin 5'-phosphate from adenosylcobinamide-GDP and alpha-ribazole 5'-phosphate. The protein is Adenosylcobinamide-GDP ribazoletransferase of Clostridium perfringens (strain 13 / Type A).